A 1073-amino-acid polypeptide reads, in one-letter code: Probable cellulose synthase A catalytic subunit 2 [UDP-forming] (1073 aa).

The Cytoplasmic portion of the chain corresponds to 1 to 270 (MDGAKSGKQC…SSSRINPYRM (270 aa)). Positions 13, 16, 32, 35, 40, 43, 55, and 58 each coordinate Zn(2+). An RING-type; degenerate zinc finger spans residues 13-59 (CQICGDGVGTAADGELFTACDVCGFPVCRPCYEYERKDGSQACPQCK). The segment at 66 to 98 (KGSPPILGDESDDVDADDASDVNYPTSGNQDHK) is disordered. Over residues 74-85 (DESDDVDADDAS) the composition is skewed to acidic residues. Residues 271-291 (VIVLRLIVLCIFLHYRITNPV) form a helical membrane-spanning segment. Over 292–293 (RN) the chain is Extracellular. The helical transmembrane segment at 294-314 (AYPLWLLSVICEIWFALSWIL) threads the bilayer. The Cytoplasmic segment spans residues 315 to 856 (DQFPKWSPIN…INTTIYPLTS (542 aa)). The UDP-alpha-D-glucose site is built by S353, K359, E360, and D389. D389 is a catalytic residue. The stretch at 443–470 (VKDRRAMKREYEEFKVRVNALVAKAQKV) forms a coiled coil. Position 530 (K530) interacts with UDP-alpha-D-glucose. The Mn(2+) site is built by K531 and D555. Residues 655-676 (GGRKKTKKSKEKSTEKKKSHKH) are disordered. The active site involves D773. The helical transmembrane segment at 857-877 (IPLLLYCILPAICLLTGKFII) threads the bilayer. Topologically, residues 878 to 882 (PEISN) are extracellular. The helical transmembrane segment at 883-903 (FASIWFISLFLSIFATGILEM) threads the bilayer. The Cytoplasmic segment spans residues 904-918 (RWSGVGIDEWWRNEQ). The helical transmembrane segment at 919–939 (FWVIGGISAHLFAVFQGLLKV) threads the bilayer. Over 940–969 (LAGIDTSFTVTSKASDEEGDFAELYMFKWT) the chain is Extracellular. A helical transmembrane segment spans residues 970 to 990 (TLLIPPTTILIINLVGVVAGI). Residues 991–1001 (SYAINSGYQSW) are Cytoplasmic-facing. The helical transmembrane segment at 1002–1022 (GPLFGKLFFAFWVIVHLYPFL) threads the bilayer. At 1023–1031 (KGLMGRQNR) the chain is on the extracellular side. Residues 1032-1052 (TPTIVVVWAILLASIFSLLWV) form a helical membrane-spanning segment. The Cytoplasmic portion of the chain corresponds to 1053-1073 (RIDPFTTRVTGPDTQKCGINC).

It belongs to the glycosyltransferase 2 family. Plant cellulose synthase subfamily. Mn(2+) is required as a cofactor. Requires Zn(2+) as cofactor.

Its subcellular location is the cell membrane. The catalysed reaction is [(1-&gt;4)-beta-D-glucosyl](n) + UDP-alpha-D-glucose = [(1-&gt;4)-beta-D-glucosyl](n+1) + UDP + H(+). The protein operates within glycan metabolism; plant cellulose biosynthesis. Its function is as follows. Probable catalytic subunit of cellulose synthase terminal complexes ('rosettes'), required for beta-1,4-glucan microfibril crystallization, a major mechanism of the cell wall formation. This Oryza sativa subsp. japonica (Rice) protein is Probable cellulose synthase A catalytic subunit 2 [UDP-forming] (CESA2).